We begin with the raw amino-acid sequence, 132 residues long: Transcription antitermination protein NusB (132 aa).

This sequence belongs to the NusB family.

In terms of biological role, involved in transcription antitermination. Required for transcription of ribosomal RNA (rRNA) genes. Binds specifically to the boxA antiterminator sequence of the ribosomal RNA (rrn) operons. This is Transcription antitermination protein NusB from Campylobacter lari (strain RM2100 / D67 / ATCC BAA-1060).